A 37-amino-acid polypeptide reads, in one-letter code: MKVAASVKKMCRNCKVIRRKGVVRVICTDPRHKQRQG.

This sequence belongs to the bacterial ribosomal protein bL36 family.

This chain is Large ribosomal subunit protein bL36, found in Methylibium petroleiphilum (strain ATCC BAA-1232 / LMG 22953 / PM1).